Reading from the N-terminus, the 404-residue chain is Formate-dependent phosphoribosylglycinamide formyltransferase (404 aa).

Residues 25 to 26 and glutamate 85 contribute to the N(1)-(5-phospho-beta-D-ribosyl)glycinamide site; that span reads EL. Residues arginine 118, lysine 159, 164-169, 199-202, and glutamate 207 each bind ATP; these read SSGKGQ and EGFV. An ATP-grasp domain is found at 123-318; the sequence is RLAAEELGLP…EFELHARAIL (196 aa). Positions 277 and 289 each coordinate Mg(2+). N(1)-(5-phospho-beta-D-ribosyl)glycinamide-binding positions include aspartate 296, lysine 365, and 372 to 373; that span reads RR.

Belongs to the PurK/PurT family. In terms of assembly, homodimer.

The enzyme catalyses N(1)-(5-phospho-beta-D-ribosyl)glycinamide + formate + ATP = N(2)-formyl-N(1)-(5-phospho-beta-D-ribosyl)glycinamide + ADP + phosphate + H(+). The protein operates within purine metabolism; IMP biosynthesis via de novo pathway; N(2)-formyl-N(1)-(5-phospho-D-ribosyl)glycinamide from N(1)-(5-phospho-D-ribosyl)glycinamide (formate route): step 1/1. Involved in the de novo purine biosynthesis. Catalyzes the transfer of formate to 5-phospho-ribosyl-glycinamide (GAR), producing 5-phospho-ribosyl-N-formylglycinamide (FGAR). Formate is provided by PurU via hydrolysis of 10-formyl-tetrahydrofolate. The polypeptide is Formate-dependent phosphoribosylglycinamide formyltransferase (Burkholderia thailandensis (strain ATCC 700388 / DSM 13276 / CCUG 48851 / CIP 106301 / E264)).